The chain runs to 80 residues: Cytochrome c oxidase subunit 7A1, mitochondrial (80 aa).

Residues Met-1 to Arg-21 constitute a mitochondrion transit peptide. At Phe-22 to Gly-46 the chain is on the mitochondrial matrix side. Residues Ala-47–Ser-75 traverse the membrane as a helical segment. Residues Phe-76–Lys-80 are Mitochondrial intermembrane-facing.

The protein belongs to the cytochrome c oxidase VIIa family. In terms of assembly, component of the complex IV (CIV, cytochrome c oxidase), a multisubunit enzyme composed of 14 subunits. The complex is composed of a catalytic core of 3 subunits MT-CO1, MT-CO2 and MT-CO3, encoded in the mitochondrial DNA, and 11 supernumerary subunits COX4I1 (or COX4I2), COX5A, COX5B, COX6A2 (or COX6A1), COX6B1 (or COX6B2), COX6C, COX7A1 (or COX7A2), COX7B, COX7C, COX8B and NDUFA4, which are encoded in the nuclear genome. The complex exists as a monomer or a dimer and forms supercomplexes (SCs) in the inner mitochondrial membrane with NADH-ubiquinone oxidoreductase (complex I, CI) and ubiquinol-cytochrome c oxidoreductase (cytochrome b-c1 complex, complex III, CIII), resulting in different assemblies (supercomplex SCI(1)III(2)IV(1) and megacomplex MCI(2)III(2)IV(2)).

It is found in the mitochondrion inner membrane. Its pathway is energy metabolism; oxidative phosphorylation. Functionally, component of the mitochondrial respiratory complex IV (CIV, also named cytochrome c oxidase complex), the last enzyme in the mitochondrial electron transport chain which drives oxidative phosphorylation. The CIV complex is the component of the respiratory chain that catalyzes the reduction of oxygen to water. Acts as an assembly factor that specifically drives the homodimerization of CIV complexes, mediating the formation of mitochondrial respiratory supercomplexes (respirasomes) containing two CIV: supercomplxes with two molecules of CIV show improved activity. Despite being highly expressed in brown adipose tissue, not required for thermogenesis. This chain is Cytochrome c oxidase subunit 7A1, mitochondrial (COX7A1), found in Bos taurus (Bovine).